The primary structure comprises 1065 residues: Valine--tRNA ligase, mitochondrial (1065 aa).

Residues 1–15 (MPHLPLASFRPPLWG) constitute a mitochondrion transit peptide. The interval 27 to 52 (ALCTQPEPHGSPVSRRNREAKQKRLR) is disordered. The segment covering 42–52 (RNREAKQKRLR) has biased composition (basic and acidic residues). Positions 146 to 156 (PNVTGSLHIGH) match the 'HIGH' region motif. Positions 659–663 (KMSKS) match the 'KMSKS' region motif. An ATP-binding site is contributed by K662.

It belongs to the class-I aminoacyl-tRNA synthetase family.

Its subcellular location is the mitochondrion. It carries out the reaction tRNA(Val) + L-valine + ATP = L-valyl-tRNA(Val) + AMP + diphosphate. Its function is as follows. Catalyzes the attachment of valine to tRNA(Val) in a two-step reaction: valine is first activated by ATP to form Val-AMP and then transferred to the acceptor end of tRNA(Val). The polypeptide is Valine--tRNA ligase, mitochondrial (Vars2) (Rattus norvegicus (Rat)).